A 743-amino-acid chain; its full sequence is Phosphoribosylformylglycinamidine synthase subunit PurL (743 aa).

Histidine 54 is an active-site residue. Residues tyrosine 57 and lysine 96 each contribute to the ATP site. Position 98 (glutamate 98) interacts with Mg(2+). Residues 99–102 (SHNH) and arginine 121 contribute to the substrate site. Residue histidine 100 is the Proton acceptor of the active site. Aspartate 122 provides a ligand contact to Mg(2+). A substrate-binding site is contributed by glutamine 245. Aspartate 273 contributes to the Mg(2+) binding site. Substrate is bound at residue 317-319 (ESQ). ATP contacts are provided by aspartate 500 and glycine 537. Residue asparagine 538 coordinates Mg(2+). Residue serine 540 participates in substrate binding.

This sequence belongs to the FGAMS family. In terms of assembly, monomer. Part of the FGAM synthase complex composed of 1 PurL, 1 PurQ and 2 PurS subunits.

Its subcellular location is the cytoplasm. The enzyme catalyses N(2)-formyl-N(1)-(5-phospho-beta-D-ribosyl)glycinamide + L-glutamine + ATP + H2O = 2-formamido-N(1)-(5-O-phospho-beta-D-ribosyl)acetamidine + L-glutamate + ADP + phosphate + H(+). The protein operates within purine metabolism; IMP biosynthesis via de novo pathway; 5-amino-1-(5-phospho-D-ribosyl)imidazole from N(2)-formyl-N(1)-(5-phospho-D-ribosyl)glycinamide: step 1/2. Part of the phosphoribosylformylglycinamidine synthase complex involved in the purines biosynthetic pathway. Catalyzes the ATP-dependent conversion of formylglycinamide ribonucleotide (FGAR) and glutamine to yield formylglycinamidine ribonucleotide (FGAM) and glutamate. The FGAM synthase complex is composed of three subunits. PurQ produces an ammonia molecule by converting glutamine to glutamate. PurL transfers the ammonia molecule to FGAR to form FGAM in an ATP-dependent manner. PurS interacts with PurQ and PurL and is thought to assist in the transfer of the ammonia molecule from PurQ to PurL. The polypeptide is Phosphoribosylformylglycinamidine synthase subunit PurL (Bacillus pumilus (strain SAFR-032)).